We begin with the raw amino-acid sequence, 87 residues long: uncharacterized protein (87 aa).

2 helical membrane passes run 25–45 (LVAAVIAVTMALWLGVQWLGG) and 53–73 (YAFLADLAAIGALIWSLLVTF).

Its subcellular location is the cell membrane. This is an uncharacterized protein from Paracoccus denitrificans.